Reading from the N-terminus, the 559-residue chain is Leucine-rich repeat protein soc-2 (559 aa).

Over residues 1–17 (METSKEFEFRPAKETSR) the composition is skewed to basic and acidic residues. A disordered region spans residues 1 to 55 (METSKEFEFRPAKETSRSKSPGGIVGRLSNFARNKARHSLSEKGSNSVGGSGGAG). LRR repeat units lie at residues 74-95 (QDQR…IKEL), 97-118 (QLTE…IGQL), 120-142 (NLKK…ASLE), 143-164 (SLET…IYKI), 166-187 (SLET…IGNL), 189-210 (KLKM…IGKL), 212-233 (SLVV…IGDC), 235-256 (SLTQ…IGKL), 258-279 (NLVR…LESC), 281-302 (QLEE…LLTM), 305-326 (KIHT…GPQQ), 329-350 (STVT…IFSK), 353-374 (RLTK…MGSW), 376-397 (SITE…IEKL), 399-420 (NLEI…IGNL), 422-443 (KLRE…IGFL), 445-466 (HLTK…IGNL), 468-489 (SLQD…IGHL), 491-513 (SLKS…LALC), and 515-536 (SLEI…ITAG).

It belongs to the SHOC2 family. As to quaternary structure, interacts with let-60.

In terms of biological role, acts as a Ras effector and participates in MAPK pathway activation. Probably acts as a scaffolding protein in a protein phosphatase complex that specifically dephosphorylates Raf kinase and stimulates Raf activity at specialized signaling complexes upon Ras activation. Required for vulval development. Involved in fluid homeostasis. Plays a role in nicotinic acetylcholine receptor (nAChR)-mediated sensitivity to nicotine. This is Leucine-rich repeat protein soc-2 (soc-2) from Caenorhabditis elegans.